Here is an 878-residue protein sequence, read N- to C-terminus: Phosphoenolpyruvate carboxylase (878 aa).

Active-site residues include histidine 140 and lysine 545.

It belongs to the PEPCase type 1 family. Mg(2+) is required as a cofactor.

It carries out the reaction oxaloacetate + phosphate = phosphoenolpyruvate + hydrogencarbonate. In terms of biological role, forms oxaloacetate, a four-carbon dicarboxylic acid source for the tricarboxylic acid cycle. This is Phosphoenolpyruvate carboxylase from Pseudomonas aeruginosa (strain ATCC 15692 / DSM 22644 / CIP 104116 / JCM 14847 / LMG 12228 / 1C / PRS 101 / PAO1).